Reading from the N-terminus, the 349-residue chain is MFEQEMYDVTIIGGGPAGLYSSFYCGLREMKTKLIESQPQLGGKIHVYPEKMIWDIGGVTPISGGQLIKQLVEQALTFNPSIYTDEKVLSIAKNDEGIFVITAESGNIHYSKTVIVAIGGGILNPQKIEIEGAERFEVSNLNYTIKSYEKFKNKAVIISGGGNTAVDWALELMEVASKVYLTYRKDQLSAHEAQITELTNSAIECHYNSEITKLIADDQEGMIKAIALTNHETGTITEIPIDEVVISHGYVRDKELLDNSPLAIERKNDYFIAGTINSESSIPGLYAAGDILHHDGKIHLIAAAFHDALHAVNSAKKYIQPDASDGGIVSSHNDIFKQRNRKLLQESLK.

7 residues coordinate FAD: Glu36, Lys44, Tyr48, Val88, Leu123, Asp290, and Ser331.

It belongs to the ferredoxin--NADP reductase type 2 family. Homodimer. FAD serves as cofactor.

It catalyses the reaction 2 reduced [2Fe-2S]-[ferredoxin] + NADP(+) + H(+) = 2 oxidized [2Fe-2S]-[ferredoxin] + NADPH. In Lysinibacillus sphaericus (strain C3-41), this protein is Ferredoxin--NADP reductase 1.